Here is a 693-residue protein sequence, read N- to C-terminus: ATP-dependent DNA helicase RecG (693 aa).

Residues 48-146 (THLYPIGELL…GDLSTPELQE (99 aa)) form a wedge domain region. The Helicase ATP-binding domain maps to 283 to 448 (DMALDVPMMR…AYADLDTSVI (166 aa)). Residue 296–303 (GDVGSGKT) coordinates ATP. The short motif at 397-400 (DEQH) is the DEAH box element. In terms of domain architecture, Helicase C-terminal spans 482–628 (EGRQAYWVCT…GFVIAQKDLE (147 aa)).

The protein belongs to the helicase family. RecG subfamily. As to quaternary structure, monomer in solution. Probably a monomer on HJ DNA. Binding to fork DNA is facilitated by SSB; the proteins do not seem to stably associate. Requires Mg(2+) as cofactor.

It catalyses the reaction Couples ATP hydrolysis with the unwinding of duplex DNA by translocating in the 3'-5' direction.. It carries out the reaction ATP + H2O = ADP + phosphate + H(+). In terms of biological role, plays a critical role in recombination and DNA repair. Helps process Holliday junction (HJ) intermediates to mature products by catalyzing branch migration. Has replication fork regression activity, unwinds stalled or blocked replication forks to make a HJ that can be resolved by RuvC or RusA. Also rewinds unwound dsDNA in an ATP-dependent manner. Has double-stranded (ds)DNA unwinding activity characteristic of a DNA helicase with 3'-5' polarity in vitro on linear dsDNA; branched duplex DNA (Y-DNA) substrates adopt different conformations that influence which of the two arms are unwound. Binds and unwinds HJ and Y-DNA but not linear duplex DNA; binds no more than 10 nucleotides of ssDNA at a fork. Has a role in constitutive stable DNA replication (cSDR, DNA replication in the absence of protein synthesis) and R-loop (RNA annealed with dsDNA) formation. Unwinds R-loops but not RNA:DNA hybrids. Is genetically synergistic to RadA and RuvABC. The polypeptide is ATP-dependent DNA helicase RecG (Escherichia coli (strain K12)).